The following is a 301-amino-acid chain: Oxygen-dependent coproporphyrinogen-III oxidase (301 aa).

S94 provides a ligand contact to substrate. The a divalent metal cation site is built by H98 and H108. H108 functions as the Proton donor in the catalytic mechanism. 110 to 112 (NVR) serves as a coordination point for substrate. 2 residues coordinate a divalent metal cation: H147 and H177. Positions 242 to 277 (YVEFNLVYDRGTLFGLQSGGRTESILMSMPPLARWE) are important for dimerization. 260-262 (GGR) contacts substrate.

It belongs to the aerobic coproporphyrinogen-III oxidase family. In terms of assembly, homodimer. A divalent metal cation serves as cofactor.

It localises to the cytoplasm. It catalyses the reaction coproporphyrinogen III + O2 + 2 H(+) = protoporphyrinogen IX + 2 CO2 + 2 H2O. The protein operates within porphyrin-containing compound metabolism; protoporphyrin-IX biosynthesis; protoporphyrinogen-IX from coproporphyrinogen-III (O2 route): step 1/1. In terms of biological role, involved in the heme biosynthesis. Catalyzes the aerobic oxidative decarboxylation of propionate groups of rings A and B of coproporphyrinogen-III to yield the vinyl groups in protoporphyrinogen-IX. This Photobacterium profundum (strain SS9) protein is Oxygen-dependent coproporphyrinogen-III oxidase.